We begin with the raw amino-acid sequence, 396 residues long: Ribosomal RNA large subunit methyltransferase I (396 aa).

Residues serine 2–phenylalanine 79 form the PUA domain.

It belongs to the methyltransferase superfamily. RlmI family.

It is found in the cytoplasm. It carries out the reaction cytidine(1962) in 23S rRNA + S-adenosyl-L-methionine = 5-methylcytidine(1962) in 23S rRNA + S-adenosyl-L-homocysteine + H(+). Functionally, specifically methylates the cytosine at position 1962 (m5C1962) of 23S rRNA. The chain is Ribosomal RNA large subunit methyltransferase I from Shewanella amazonensis (strain ATCC BAA-1098 / SB2B).